Consider the following 338-residue polypeptide: Deoxyhypusine hydroxylase (338 aa).

5 HEAT-like PBS-type repeats span residues 71 to 97 (LKHE…VLKD), 104 to 130 (CRHE…LKDD), 200 to 233 (QRYR…GLKD), 238 to 264 (FRHE…CLSN), and 271 to 298 (VRHE…FLND). His-73, Glu-74, His-106, and Glu-107 together coordinate Fe cation. Fe cation is bound by residues His-240, Glu-241, His-273, and Glu-274.

It belongs to the deoxyhypusine hydroxylase family. The cofactor is Fe(2+).

It localises to the cytoplasm. The protein localises to the nucleus. The enzyme catalyses [eIF5A protein]-deoxyhypusine + AH2 + O2 = [eIF5A protein]-hypusine + A + H2O. It participates in protein modification; eIF5A hypusination. Catalyzes the hydroxylation of the N(6)-(4-aminobutyl)-L-lysine intermediate to form hypusine, an essential post-translational modification only found in mature eIF-5A factor. The sequence is that of Deoxyhypusine hydroxylase (lia1) from Aspergillus niger (strain ATCC MYA-4892 / CBS 513.88 / FGSC A1513).